A 335-amino-acid chain; its full sequence is Dihydroorotate dehydrogenase (quinone) (335 aa).

Residues 59 to 63 (AGLDK) and T83 each bind FMN. Substrate is bound at residue K63. 108–112 (NRMGF) contributes to the substrate binding site. FMN is bound by residues N136 and N169. A substrate-binding site is contributed by N169. The active-site Nucleophile is the S172. N174 provides a ligand contact to substrate. Residues K214 and T242 each contribute to the FMN site. 243 to 244 (NT) lines the substrate pocket. FMN-binding positions include G265, G294, and 315–316 (YS).

It belongs to the dihydroorotate dehydrogenase family. Type 2 subfamily. Monomer. It depends on FMN as a cofactor.

It localises to the cell membrane. It catalyses the reaction (S)-dihydroorotate + a quinone = orotate + a quinol. It participates in pyrimidine metabolism; UMP biosynthesis via de novo pathway; orotate from (S)-dihydroorotate (quinone route): step 1/1. Functionally, catalyzes the conversion of dihydroorotate to orotate with quinone as electron acceptor. The polypeptide is Dihydroorotate dehydrogenase (quinone) (Neisseria gonorrhoeae (strain ATCC 700825 / FA 1090)).